A 561-amino-acid polypeptide reads, in one-letter code: Potassium-transporting ATPase potassium-binding subunit (561 aa).

The next 12 membrane-spanning stretches (helical) occupy residues 5–25 (LAAG…YVPV), 60–80 (YGYA…LYFL), 86–106 (VLPL…NTAI), 130–150 (VGLA…AIAL), 177–197 (ILLP…VIQS), 247–267 (PTPL…VCLT), 281–301 (LTLL…TLAA), 324–344 (FGIP…TGAV), 376–396 (GLYG…LLVG), 415–435 (ALSI…TVIL), 491–511 (ICML…AGAL), and 533–553 (GLLT…ALAL).

The protein belongs to the KdpA family. The system is composed of three essential subunits: KdpA, KdpB and KdpC.

It is found in the cell membrane. Part of the high-affinity ATP-driven potassium transport (or Kdp) system, which catalyzes the hydrolysis of ATP coupled with the electrogenic transport of potassium into the cytoplasm. This subunit binds the extracellular potassium ions and delivers the ions to the membrane domain of KdpB through an intramembrane tunnel. The sequence is that of Potassium-transporting ATPase potassium-binding subunit from Rhodococcus erythropolis (strain PR4 / NBRC 100887).